The following is a 146-amino-acid chain: Hemoglobin subunit beta (146 aa).

Positions 2–146 constitute a Globin domain; the sequence is HWTAEEKQLI…VAHALARKYH (145 aa). Heme b-binding residues include histidine 63 and histidine 92.

It belongs to the globin family. Heterotetramer of two alpha chains and two beta chains. In terms of tissue distribution, red blood cells.

Functionally, involved in oxygen transport from the lung to the various peripheral tissues. This chain is Hemoglobin subunit beta (HBB), found in Ciconia ciconia (White stork).